A 214-amino-acid polypeptide reads, in one-letter code: High frequency lysogenization protein HflD homolog (214 aa).

Belongs to the HflD family.

The protein localises to the cytoplasm. Its subcellular location is the cell inner membrane. This is High frequency lysogenization protein HflD homolog from Chromohalobacter salexigens (strain ATCC BAA-138 / DSM 3043 / CIP 106854 / NCIMB 13768 / 1H11).